A 282-amino-acid polypeptide reads, in one-letter code: MAIRSLFRKKNEDGQEKGFPEGLMTKCPECRHILLTKELEKNHKVCTKCDHHFKMTAQERVAYFIDEGSFVSMDDHLQTSNPLNFPDYVEKISVAKQQTGLSEAVLTGVGTLDGEEIVVAIMDSHFRMGSMGSVVGEKITRAVEKAIELRVPVIIFTASGGARMQEGILSLMQMVKTSVALKRHSEEGLLFISIMTHPTYGGVSASFASVGDINIAEPQALIGFAGRRVIEETLREKLPNDFQKSEFLLAHGQLDAVFHRKDLRNQVAMLVKMHTKGGVQHV.

Residues 23-282 form the CoA carboxyltransferase N-terminal domain; the sequence is LMTKCPECRH…MHTKGGVQHV (260 aa). Residues Cys27, Cys30, Cys46, and Cys49 each coordinate Zn(2+). The segment at 27-49 adopts a C4-type zinc-finger fold; sequence CPECRHILLTKELEKNHKVCTKC.

Belongs to the AccD/PCCB family. In terms of assembly, acetyl-CoA carboxylase is a heterohexamer composed of biotin carboxyl carrier protein (AccB), biotin carboxylase (AccC) and two subunits each of ACCase subunit alpha (AccA) and ACCase subunit beta (AccD). Requires Zn(2+) as cofactor.

The protein localises to the cytoplasm. The catalysed reaction is N(6)-carboxybiotinyl-L-lysyl-[protein] + acetyl-CoA = N(6)-biotinyl-L-lysyl-[protein] + malonyl-CoA. It participates in lipid metabolism; malonyl-CoA biosynthesis; malonyl-CoA from acetyl-CoA: step 1/1. Component of the acetyl coenzyme A carboxylase (ACC) complex. Biotin carboxylase (BC) catalyzes the carboxylation of biotin on its carrier protein (BCCP) and then the CO(2) group is transferred by the transcarboxylase to acetyl-CoA to form malonyl-CoA. The protein is Acetyl-coenzyme A carboxylase carboxyl transferase subunit beta 1 of Lysinibacillus sphaericus (strain C3-41).